Reading from the N-terminus, the 329-residue chain is Putative glucose-6-phosphate 1-epimerase (329 aa).

The span at 1–13 (MAAPAPAGAAASP) shows a compositional bias: low complexity. A disordered region spans residues 1 to 20 (MAAPAPAGAAASPSPKPQLP). Positions 82, 100, and 105 each coordinate substrate. Histidine 183 is an active-site residue. Aspartate 228 is a substrate binding site. Residue glutamate 287 is part of the active site.

The protein belongs to the glucose-6-phosphate 1-epimerase family.

It carries out the reaction alpha-D-glucose 6-phosphate = beta-D-glucose 6-phosphate. The chain is Putative glucose-6-phosphate 1-epimerase from Cenchrus ciliaris (Buffelgrass).